The chain runs to 103 residues: Putative membrane protein insertion efficiency factor (103 aa).

The protein belongs to the UPF0161 family.

Its subcellular location is the cell inner membrane. Its function is as follows. Could be involved in insertion of integral membrane proteins into the membrane. In Chlamydia caviae (strain ATCC VR-813 / DSM 19441 / 03DC25 / GPIC) (Chlamydophila caviae), this protein is Putative membrane protein insertion efficiency factor.